A 139-amino-acid polypeptide reads, in one-letter code: uncharacterized protein (139 aa).

The HTH cro/C1-type domain maps to 8–63 (LRELRRARKLTVNQLAVYSGISSATISKIENGKRGTPKPATIKKLAAVLKVPYENL). The segment at residues 19–38 (VNQLAVYSGISSATISKIEN) is a DNA-binding region (H-T-H motif).

This is an uncharacterized protein from Bacillus subtilis (strain 168).